Here is a 507-residue protein sequence, read N- to C-terminus: ATP synthase subunit alpha 2 (507 aa).

171 to 178 (GDRATGKT) is a binding site for ATP.

Belongs to the ATPase alpha/beta chains family. F-type ATPases have 2 components, CF(1) - the catalytic core - and CF(0) - the membrane proton channel. CF(1) has five subunits: alpha(3), beta(3), gamma(1), delta(1), epsilon(1). CF(0) has three main subunits: a(1), b(2) and c(9-12). The alpha and beta chains form an alternating ring which encloses part of the gamma chain. CF(1) is attached to CF(0) by a central stalk formed by the gamma and epsilon chains, while a peripheral stalk is formed by the delta and b chains.

It is found in the cell inner membrane. It catalyses the reaction ATP + H2O + 4 H(+)(in) = ADP + phosphate + 5 H(+)(out). Its function is as follows. Produces ATP from ADP in the presence of a proton gradient across the membrane. The alpha chain is a regulatory subunit. The chain is ATP synthase subunit alpha 2 from Gluconobacter oxydans (strain 621H) (Gluconobacter suboxydans).